The sequence spans 297 residues: 4-hydroxy-tetrahydrodipicolinate synthase (297 aa).

Thr49 serves as a coordination point for pyruvate. Residue Tyr137 is the Proton donor/acceptor of the active site. The Schiff-base intermediate with substrate role is filled by Lys166. Ile208 lines the pyruvate pocket.

This sequence belongs to the DapA family. As to quaternary structure, homotetramer; dimer of dimers.

Its subcellular location is the cytoplasm. It catalyses the reaction L-aspartate 4-semialdehyde + pyruvate = (2S,4S)-4-hydroxy-2,3,4,5-tetrahydrodipicolinate + H2O + H(+). It participates in amino-acid biosynthesis; L-lysine biosynthesis via DAP pathway; (S)-tetrahydrodipicolinate from L-aspartate: step 3/4. In terms of biological role, catalyzes the condensation of (S)-aspartate-beta-semialdehyde [(S)-ASA] and pyruvate to 4-hydroxy-tetrahydrodipicolinate (HTPA). The protein is 4-hydroxy-tetrahydrodipicolinate synthase of Parabacteroides distasonis (strain ATCC 8503 / DSM 20701 / CIP 104284 / JCM 5825 / NCTC 11152).